Consider the following 228-residue polypeptide: L-ribulose-5-phosphate 4-epimerase UlaF (228 aa).

Substrate-binding positions include 26-27 (GN), 43-44 (SG), and 72-73 (SS). Zn(2+)-binding residues include D74, H93, and H95. D118 functions as the Proton donor/acceptor in the catalytic mechanism. H167 is a Zn(2+) binding site. Y225 acts as the Proton donor/acceptor in catalysis.

The protein belongs to the aldolase class II family. AraD/FucA subfamily. The cofactor is Zn(2+).

It catalyses the reaction L-ribulose 5-phosphate = D-xylulose 5-phosphate. It functions in the pathway cofactor degradation; L-ascorbate degradation; D-xylulose 5-phosphate from L-ascorbate: step 4/4. Its function is as follows. Catalyzes the isomerization of L-ribulose 5-phosphate to D-xylulose 5-phosphate. Is involved in the anaerobic L-ascorbate utilization. In Salmonella paratyphi A (strain ATCC 9150 / SARB42), this protein is L-ribulose-5-phosphate 4-epimerase UlaF.